The following is a 296-amino-acid chain: Probable redox regulatory protein BQ2027_MB0506C (296 aa).

It belongs to the Rv0495c family.

In terms of biological role, essential for maintaining intracellular redox homeostasis. This chain is Probable redox regulatory protein BQ2027_MB0506C, found in Mycobacterium bovis (strain ATCC BAA-935 / AF2122/97).